A 455-amino-acid chain; its full sequence is Protein chibby homolog 2 (455 aa).

8 positions are modified to phosphoserine: S41, S86, S89, S97, S124, S144, S148, and S150. Residues K160–V197 adopt a coiled-coil conformation. A phosphoserine mark is found at S211 and S225. Residues G240 to Y266 are a coiled coil. Residues W267 to S318 are disordered. Basic and acidic residues predominate over residues P270 to H291. 2 positions are modified to phosphoserine: S276 and S332. Positions S350–I421 form a coiled coil.

This sequence belongs to the chibby family. SPERT subfamily. Homodimer. Binds to NEK1.

The chain is Protein chibby homolog 2 (CBY2) from Bos taurus (Bovine).